The following is a 345-amino-acid chain: Glycosyltransferase 1 domain-containing protein 1 (345 aa).

The signal sequence occupies residues 1–19; it reads MKILFLACLRAHTGNSTTA. N-linked (GlcNAc...) asparagine glycans are attached at residues N246 and N322.

The protein belongs to the glycosyltransferase group 1 family. Glycosyltransferase 4 subfamily.

Its subcellular location is the secreted. The sequence is that of Glycosyltransferase 1 domain-containing protein 1 (glt1d1) from Xenopus tropicalis (Western clawed frog).